We begin with the raw amino-acid sequence, 454 residues long: MFAMKRREFIAASAAVAASSLLPQTPAWARGRKVRLAMIGTGMRGLVLLKELVRRDDVEVVALCDIEPIMLGRAMDMVAKAGKPAPKTYGQDRDTHAWKRLLEQKGIDGVIIATPWEYHAPMAIAAMQAGVAVGCEVVAGITLQDHWDVLKTQLSTGTPYMLLENVCYRRDVMAALQMVRQGLFGELVHLQAGYQHDLRGVKFNSGDPNQPYDSGVEFGPKGWSEARWRTEHSVERNGELYPSHGIGPCAMYTGINRGNRFTHINAFATKARGLHEYTVAKSGGTTHPSTKVKFKLGDIVTTTLACENGETILLQHDTSLPRPYSMGFRVQGTKGLWMDVNHSIHIEGRSPPHQWEEFKKYQDEYEHPLWKQNADTAASAGHGGMDWFVIHAFVEALKAKAPMPIDIYDAVTWSAITPLSEQSIANSFQTLEFPDFTAGAWKQRKPIFAFDGKY.

Residues 1–29 (MFAMKRREFIAASAAVAASSLLPQTPAWA) constitute a signal peptide (tat-type signal). Residues 43–44 (MR), Asp-65, 116–119 (WEYH), 136–137 (EV), and Asn-165 contribute to the NAD(+) site. Tyr-194 provides a ligand contact to substrate. Residue 224-228 (SEARW) coordinates NAD(+). Residues Arg-229, 241-244 (YPSH), and Tyr-324 each bind substrate. Tyr-241 provides a ligand contact to NAD(+).

This sequence belongs to the Gfo/Idh/MocA family. Glycosyl hydrolase 109 subfamily. The cofactor is NAD(+). In terms of processing, predicted to be exported by the Tat system. The position of the signal peptide cleavage has not been experimentally proven.

Functionally, glycosidase. The protein is Glycosyl hydrolase family 109 protein of Stenotrophomonas maltophilia (strain K279a).